Consider the following 362-residue polypeptide: 3-dehydroquinate synthase (362 aa).

Residues 71–76 (DGERYK), 105–109 (GVIGD), 129–130 (TT), Lys142, Lys151, and 169–172 (CLKT) each bind NAD(+). Positions 184, 247, and 264 each coordinate Zn(2+).

It belongs to the sugar phosphate cyclases superfamily. Dehydroquinate synthase family. It depends on Co(2+) as a cofactor. Zn(2+) is required as a cofactor. Requires NAD(+) as cofactor.

Its subcellular location is the cytoplasm. It catalyses the reaction 7-phospho-2-dehydro-3-deoxy-D-arabino-heptonate = 3-dehydroquinate + phosphate. Its pathway is metabolic intermediate biosynthesis; chorismate biosynthesis; chorismate from D-erythrose 4-phosphate and phosphoenolpyruvate: step 2/7. Its function is as follows. Catalyzes the conversion of 3-deoxy-D-arabino-heptulosonate 7-phosphate (DAHP) to dehydroquinate (DHQ). This is 3-dehydroquinate synthase from Salmonella arizonae (strain ATCC BAA-731 / CDC346-86 / RSK2980).